We begin with the raw amino-acid sequence, 194 residues long: Probable thymidylate kinase (194 aa).

9 to 16 (GIDGVGKS) is a binding site for ATP.

Belongs to the thymidylate kinase family.

It catalyses the reaction dTMP + ATP = dTDP + ADP. The chain is Probable thymidylate kinase from Methanopyrus kandleri (strain AV19 / DSM 6324 / JCM 9639 / NBRC 100938).